The sequence spans 471 residues: MAQATKSGFNAGVQDYRLTYYTPDYTPKDTDLLACFRMTPQPGVPPEEAGAAVAAESSTGTWTTVWTDNLTDLDRYKGRCYDIEPVPNEDNQYFCFIAYPLDLFEEGSVTNVLTSLVGNVFGFKALRALRLEDIRFPVALIKTFQGPPHGITVERDKLNKYGRPLLGCTIKPKLGLSAKNYGRAVYECLRGGLDFTKDDENINSQPFMRWRDRFLFVQEAIEKAQAETNEVKGHYLNVTAGTCEEMMKRAEFAKEIGTPIVMHDFLTGGFTANTTLAKFCRDNGILLHIHRAMHAVIDRQKNHGIHFRVLAKCLRLSGGDHLHSGTVVGKLEGERGITMGFVDLMREDYVEEDRSRGIFFTQDYASMPGTMPVASGGIHVWHMPALVEIFGDDSCLQFGGGTLGHPWGNAPGATANRVALEACIQARNEGRNLAREGNDVIREACKWSPELAAACELWKEITFEFEAMDTL.

Residues asparagine 119 and threonine 169 each coordinate substrate. Residue lysine 171 is the Proton acceptor of the active site. Position 173 (lysine 173) interacts with substrate. Mg(2+)-binding residues include lysine 197, aspartate 199, and glutamate 200. An N6-carboxylysine modification is found at lysine 197. Histidine 290 (proton acceptor) is an active-site residue. Residues arginine 291, histidine 323, and serine 375 each contribute to the substrate site.

This sequence belongs to the RuBisCO large chain family. Type I subfamily. Heterohexadecamer of 8 large chains and 8 small chains; disulfide-linked. The disulfide link is formed within the large subunit homodimers. Requires Mg(2+) as cofactor. In terms of processing, the disulfide bond which can form in the large chain dimeric partners within the hexadecamer appears to be associated with oxidative stress and protein turnover.

The protein resides in the carboxysome. It catalyses the reaction 2 (2R)-3-phosphoglycerate + 2 H(+) = D-ribulose 1,5-bisphosphate + CO2 + H2O. The enzyme catalyses D-ribulose 1,5-bisphosphate + O2 = 2-phosphoglycolate + (2R)-3-phosphoglycerate + 2 H(+). In terms of biological role, ruBisCO catalyzes two reactions: the carboxylation of D-ribulose 1,5-bisphosphate, the primary event in carbon dioxide fixation, as well as the oxidative fragmentation of the pentose substrate in the photorespiration process. Both reactions occur simultaneously and in competition at the same active site. The sequence is that of Ribulose bisphosphate carboxylase large chain from Crocosphaera subtropica (strain ATCC 51142 / BH68) (Cyanothece sp. (strain ATCC 51142)).